The sequence spans 396 residues: Probable sugar efflux transporter (396 aa).

Helical transmembrane passes span 15 to 35 (VVTL…PVGL), 50 to 70 (VGIM…PFML), 81 to 101 (LICL…SWSF), 103 to 123 (VLVI…SITA), 136 to 156 (AQAL…GLPL), 170 to 190 (FFAI…LLPL), 209 to 229 (PALM…YTAY), 246 to 266 (FATA…VIFG), 275 to 295 (ALVS…LPAA), 299 to 319 (IHLG…GLGM), 333 to 353 (VAMA…ALVG), and 364 to 384 (MIGY…IIIF).

It belongs to the major facilitator superfamily. SotB (TC 2.A.1.2) family.

The protein localises to the cell inner membrane. In terms of biological role, involved in the efflux of sugars. The physiological role may be the reduction of the intracellular concentration of toxic sugars or sugar metabolites. The chain is Probable sugar efflux transporter from Escherichia coli O6:K15:H31 (strain 536 / UPEC).